We begin with the raw amino-acid sequence, 41 residues long: Large ribosomal subunit protein bL36 (41 aa).

Belongs to the bacterial ribosomal protein bL36 family.

The sequence is that of Large ribosomal subunit protein bL36 from Rickettsia africae (strain ESF-5).